The chain runs to 418 residues: Deubiquitinase and deneddylase Dub1 (418 aa).

Positions 1-10 (MLSPTNSISK) are enriched in polar residues. A disordered region spans residues 1–23 (MLSPTNSISKTAPVPPQDSSKPV). The chain crosses the membrane as a helical span at residues 40-60 (TALAVLLVVVTLGLILLFYSF). Residues 72–144 (TRPSTKEQPT…PLPPKAPKPV (73 aa)) are disordered. Pro residues predominate over residues 86–141 (VPLPSPPLAVPRPSTPPPPVISRPSTPPAPTPAISPPSTPSAPKPSTPPPLPPKAP). Residues histidine 288, aspartate 305, and cysteine 358 contribute to the active site.

Belongs to the peptidase C48 family.

It localises to the secreted. The protein localises to the host cell. It is found in the membrane. Functionally, effector proteins function to alter host cell physiology and promote bacterial survival in host tissues. This protease possesses deubiquitinating and deneddylating activities. This chain is Deubiquitinase and deneddylase Dub1 (cdu1), found in Chlamydia trachomatis serovar B (strain TZ1A828/OT).